Reading from the N-terminus, the 376-residue chain is Erythronate-4-phosphate dehydrogenase (376 aa).

Residues Ser-45 and Thr-67 each contribute to the substrate site. Residue Asp-147 participates in NAD(+) binding. Arg-209 is a catalytic residue. Asp-233 is an NAD(+) binding site. Glu-238 is a catalytic residue. His-255 serves as the catalytic Proton donor. Gly-258 contributes to the NAD(+) binding site. Tyr-259 lines the substrate pocket.

This sequence belongs to the D-isomer specific 2-hydroxyacid dehydrogenase family. PdxB subfamily. Homodimer.

The protein resides in the cytoplasm. The enzyme catalyses 4-phospho-D-erythronate + NAD(+) = (R)-3-hydroxy-2-oxo-4-phosphooxybutanoate + NADH + H(+). Its pathway is cofactor biosynthesis; pyridoxine 5'-phosphate biosynthesis; pyridoxine 5'-phosphate from D-erythrose 4-phosphate: step 2/5. Its function is as follows. Catalyzes the oxidation of erythronate-4-phosphate to 3-hydroxy-2-oxo-4-phosphonooxybutanoate. This Shewanella baltica (strain OS195) protein is Erythronate-4-phosphate dehydrogenase.